We begin with the raw amino-acid sequence, 88 residues long: Conotoxin Gm9.1 (88 aa).

The first 27 residues, M1–S27, serve as a signal peptide directing secretion. The propeptide occupies G28–S58. 3 disulfides stabilise this stretch: C62-C76, C66-C78, and C72-C83. An Asparagine amide modification is found at N87.

Belongs to the conotoxin P superfamily. As to expression, expressed by the venom duct.

It localises to the secreted. Its function is as follows. Neurotoxin. In vivo, elicits 'spasmodic' symptomatology. The chain is Conotoxin Gm9.1 from Conus gloriamaris (Glory-of-the-Sea cone).